The sequence spans 1369 residues: Xanthine dehydrogenase (1369 aa).

In terms of domain architecture, 2Fe-2S ferredoxin-type spans 20 to 106; sequence GEAVVYVNGV…GMHIITVEGI (87 aa). Residues cysteine 58, cysteine 63, cysteine 66, cysteine 88, cysteine 128, cysteine 131, cysteine 164, and cysteine 166 each coordinate [2Fe-2S] cluster. The FAD-binding PCMH-type domain maps to 265 to 450; that stretch reads NGFNGIRWYR…LSVILPWTRP (186 aa). FAD is bound by residues 293 to 300, phenylalanine 373, 383 to 387, aspartate 396, leucine 440, and lysine 458; these read LIIGNSEV and SVGGN. Mo-molybdopterin contacts are provided by glutamine 804 and phenylalanine 835. Positions 839 and 917 each coordinate substrate. Arginine 949 serves as a coordination point for Mo-molybdopterin. Substrate contacts are provided by phenylalanine 951 and threonine 1047. Alanine 1116 contributes to the Mo-molybdopterin binding site. The Proton acceptor role is filled by glutamate 1305.

Belongs to the xanthine dehydrogenase family. Homodimer. [2Fe-2S] cluster is required as a cofactor. It depends on FAD as a cofactor. Mo-molybdopterin serves as cofactor.

The enzyme catalyses xanthine + NAD(+) + H2O = urate + NADH + H(+). It carries out the reaction hypoxanthine + NAD(+) + H2O = xanthine + NADH + H(+). Its function is as follows. Key enzyme involved in purine catabolism. Catalyzes the oxidation of hypoxanthine to xanthine and the oxidation of xanthine to urate. The chain is Xanthine dehydrogenase (XDH) from Oryza sativa subsp. japonica (Rice).